The sequence spans 138 residues: NADH-quinone oxidoreductase subunit A (138 aa).

The next 3 helical transmembrane spans lie at 8 to 28 (FGAV…GYLT), 63 to 83 (FYVV…LFPW), and 93 to 113 (FALI…AYAW).

The protein belongs to the complex I subunit 3 family. NDH-1 is composed of 14 different subunits. Subunits NuoA, H, J, K, L, M, N constitute the membrane sector of the complex.

Its subcellular location is the cell inner membrane. It carries out the reaction a quinone + NADH + 5 H(+)(in) = a quinol + NAD(+) + 4 H(+)(out). Functionally, NDH-1 shuttles electrons from NADH, via FMN and iron-sulfur (Fe-S) centers, to quinones in the respiratory chain. The immediate electron acceptor for the enzyme in this species is believed to be a menaquinone. Couples the redox reaction to proton translocation (for every two electrons transferred, four hydrogen ions are translocated across the cytoplasmic membrane), and thus conserves the redox energy in a proton gradient. The chain is NADH-quinone oxidoreductase subunit A from Prosthecochloris aestuarii (strain DSM 271 / SK 413).